Reading from the N-terminus, the 25-residue chain is Neuromedin-U-25 (25 aa).

Asparagine 25 is subject to Asparagine amide.

This sequence belongs to the NmU family.

Its subcellular location is the secreted. Its function is as follows. Stimulates uterine smooth muscle contraction and causes selective vasoconstriction. The sequence is that of Neuromedin-U-25 from Rana temporaria (European common frog).